A 219-amino-acid polypeptide reads, in one-letter code: Ropporin-1-like protein (219 aa).

Positions 17 to 54 (PELPDILKQFTKAAIRTQPHDLLQWSAAYFDSLSKGEP) constitute an RIIa domain.

This sequence belongs to the ropporin family. Component of axonemal radial spoke complexes.

The protein resides in the cell projection. It localises to the cilium. The protein localises to the flagellum. Functionally, functions as part of axonemal radial spoke complexes that play an important part in the motility of sperm and cilia. Important for male fertility. Involved in fibrous sheath integrity and sperm motility, plays a role in PKA-dependent signaling processes required for spermatozoa capacitation. This Xenopus laevis (African clawed frog) protein is Ropporin-1-like protein (ropn1l).